Reading from the N-terminus, the 952-residue chain is Probable mixed-linked glucan synthase 6 (952 aa).

The next 2 helical transmembrane spans lie at 102–122 and 132–152; these read LLHP…LFVI and AMWL…SWLL. Asp-227 is a catalytic residue. Residues 278-308 are a coiled coil; the sequence is EEFVNDRRRVRKEYDDFKARINGLEHDIKQR. Residues Asp-429 and Asp-431 each coordinate substrate. The active site involves Asp-636. 6 helical membrane-spanning segments follow: residues 718 to 738, 744 to 764, 782 to 802, 834 to 854, 865 to 885, and 898 to 918; these read LFLI…HFIV, MFYV…VLEV, MTAS…KVVF, WLMI…AVAF, WLKV…LYPF, and VVVL…YINI.

This sequence belongs to the glycosyltransferase 2 family. Plant cellulose synthase-like F subfamily.

It is found in the golgi apparatus membrane. In terms of biological role, may catalyze both beta-1,3 and beta-1,4 glycosidic linkage on beta-D-glucan. Essential for (1,3;1,4)-beta-D-glucans synthesis in grasses and cereals (Poaceae). The mixed-linked glucans (which are not present in walls of dicotyledons or most other monocotyledonous plants) are particularly important constituents of the walls of the starchy endosperm and aleurone cells of cereal grains such as oats, wheat, rice and barley. They can account for up to 70% by weight of the wall. This chain is Probable mixed-linked glucan synthase 6 (CSLF6), found in Oryza sativa subsp. japonica (Rice).